We begin with the raw amino-acid sequence, 484 residues long: Glutamate--tRNA ligase (484 aa).

The short motif at 11–21 is the 'HIGH' region element; the sequence is PSPTGYLHIGN. Residues 252-256 carry the 'KMSKS' region motif; sequence KLSKR. K255 is a binding site for ATP.

It belongs to the class-I aminoacyl-tRNA synthetase family. Glutamate--tRNA ligase type 1 subfamily. As to quaternary structure, monomer.

It is found in the cytoplasm. It carries out the reaction tRNA(Glu) + L-glutamate + ATP = L-glutamyl-tRNA(Glu) + AMP + diphosphate. Its function is as follows. Catalyzes the attachment of glutamate to tRNA(Glu) in a two-step reaction: glutamate is first activated by ATP to form Glu-AMP and then transferred to the acceptor end of tRNA(Glu). This chain is Glutamate--tRNA ligase, found in Staphylococcus aureus (strain bovine RF122 / ET3-1).